The sequence spans 194 residues: Naphthalene 1,2-dioxygenase system, small oxygenase component (194 aa).

It belongs to the bacterial ring-hydroxylating dioxygenase beta subunit family. As to quaternary structure, the naphthalene dioxygenase (NDO) multicomponent enzyme system is composed of an electron transfer component and a dioxygenase component (iron sulfur protein (ISP)). The electron transfer component is composed of a ferredoxin reductase (NdoR) and a ferredoxin (NdoA), and the dioxygenase component is formed of a heterohexamer (trimer of heterodimers) of three large alpha subunits (NdoB) and three small beta subunits (NdoC).

The protein operates within aromatic compound metabolism; naphthalene degradation. Component of the naphthalene dioxygenase (NDO) multicomponent enzyme system which catalyzes the incorporation of both atoms of molecular oxygen into naphthalene to form cis-(1R,2S)-dihydroxy-1,2-dihydronaphthalene. The beta subunit seems to have a structural role in the holoenzyme. Also able to catalyze the cis-dihydroxylation of biphenyl and phenanthrene. In Pseudomonas putida (Arthrobacter siderocapsulatus), this protein is Naphthalene 1,2-dioxygenase system, small oxygenase component.